A 200-amino-acid polypeptide reads, in one-letter code: ATP-dependent Clp protease proteolytic subunit 1 (200 aa).

The active-site Nucleophile is Ser-102. The active site involves His-127.

It belongs to the peptidase S14 family. As to quaternary structure, fourteen ClpP subunits assemble into 2 heptameric rings which stack back to back to give a disk-like structure with a central cavity, resembling the structure of eukaryotic proteasomes.

The protein localises to the cytoplasm. It catalyses the reaction Hydrolysis of proteins to small peptides in the presence of ATP and magnesium. alpha-casein is the usual test substrate. In the absence of ATP, only oligopeptides shorter than five residues are hydrolyzed (such as succinyl-Leu-Tyr-|-NHMec, and Leu-Tyr-Leu-|-Tyr-Trp, in which cleavage of the -Tyr-|-Leu- and -Tyr-|-Trp bonds also occurs).. Functionally, cleaves peptides in various proteins in a process that requires ATP hydrolysis. Has a chymotrypsin-like activity. Plays a major role in the degradation of misfolded proteins. The protein is ATP-dependent Clp protease proteolytic subunit 1 of Bradyrhizobium diazoefficiens (strain JCM 10833 / BCRC 13528 / IAM 13628 / NBRC 14792 / USDA 110).